The chain runs to 1097 residues: MPAEKEKKKHKLIDIAVELQVSLDDIRSFVEELGYRTTNSTKVTDSVKELILDNYSDEKKKSDLHKKLKAEKNRKIQLLEKRVSPQADKFSKKKTAAKKEASQEKADAHAKLEPSIPEEAPAAIDIDDTPEVAPEIEIPSQNTQEPEPVEMDEVASAATLAVEEAPIAAAPTEEPMHNSEAELPESKIDSAEAVAEEAAPEVEVHLEPKEQEVQELNHAEEAETPTTEASSEETSAVMTKEGDSNDAQPFTQHEPVSRKTQNTTNVSEENKQHEKQPETLKSDKAMDVVQPVPIAEETAEQQLTEASSYEKKETNLQGENLETNEADAAQTEAKDDDAQSDSLQAEISRQQNEISNRFSQSENIAGLKVFGEIELHKKKRKRKKNFREQAKDLKQQMTPEQPKQEEKPVKKEKPKEREKPAAGKKEQTPGKKPVREDQKERVLQDGPARVIKKKPKKAVDEKVVDRNIRQTMMTMDDTNDSSARQKFRKIRKRERLREQEIEAAAKEAESKVLKITEFASTHELADMLGVTPKEVIQKCFKLGKFITINQRLDKETIELLSLEFNYEVHFISDVEATEIDDDPDLPEDMKTRPPVVTIMGHVDHGKTSLLDYIRNSNVVAGESGGITQHMGAYEVTLENKQRLTFLDTPGHEAFTAMRARGAQVTDVVILVVAADDNVMPQTVEAINHAKAAEVPIIVAINKIDKPDANPEKIRTQLADIGVLVEDWGGSVQCQEISAKKGTGVRDLIDKVLVEAELLELKANYSEDKLSRGVVIEAELDKGKGVIATILVQTGIINVGMPFVAGGSSGRIRAMLDERGNRLETVYPSQPVRILGFEELPQAGDLFSIMPSDREAREIAQRRQVIRREHEFRHSSRVKLNDIAKQVQEGQVQELRVIIKADTDGSIQALADGLMKVQTDEVKVEVIHRGVGQITETDVLLAAASDAIIIGFRVRPNVNAKKLAEKEEIDIRFYSVIYHVLEDIHDALEGMLSPELQEKVTATVEIRDIFRISKIGNVAGCHVLDGKINRDSRVRLLRDGIQIYEGVLDSLKRHKDDVKEVDSGYDCGLTLKNYDDIKVNDIVESFETVETKRKLVVS.

The disordered stretch occupies residues 79–458 (LEKRVSPQAD…RVIKKKPKKA (380 aa)). The segment covering 97–112 (AKKEASQEKADAHAKL) has biased composition (basic and acidic residues). The segment covering 157–173 (AATLAVEEAPIAAAPTE) has biased composition (low complexity). 2 stretches are compositionally biased toward basic and acidic residues: residues 174 to 190 (EPMHNSEAELPESKIDS) and 202 to 221 (VEVHLEPKEQEVQELNHAEE). The span at 224-236 (TPTTEASSEETSA) shows a compositional bias: low complexity. Positions 258–267 (RKTQNTTNVS) are enriched in polar residues. The span at 268–286 (EENKQHEKQPETLKSDKAM) shows a compositional bias: basic and acidic residues. The segment covering 340-363 (SDSLQAEISRQQNEISNRFSQSEN) has biased composition (polar residues). Basic residues predominate over residues 376-385 (HKKKRKRKKN). Residues 402–443 (PKQEEKPVKKEKPKEREKPAAGKKEQTPGKKPVREDQKERVL) are compositionally biased toward basic and acidic residues. Positions 591-761 (TRPPVVTIMG…LVEAELLELK (171 aa)) constitute a tr-type G domain. The segment at 600-607 (GHVDHGKT) is G1. 600–607 (GHVDHGKT) lines the GTP pocket. Residues 625 to 629 (GITQH) are G2. A G3 region spans residues 647-650 (DTPG). Residues 647 to 651 (DTPGH) and 701 to 704 (NKID) contribute to the GTP site. Residues 701-704 (NKID) form a G4 region. The tract at residues 737–739 (SAK) is G5.

The protein belongs to the TRAFAC class translation factor GTPase superfamily. Classic translation factor GTPase family. IF-2 subfamily.

It is found in the cytoplasm. Functionally, one of the essential components for the initiation of protein synthesis. Protects formylmethionyl-tRNA from spontaneous hydrolysis and promotes its binding to the 30S ribosomal subunits. Also involved in the hydrolysis of GTP during the formation of the 70S ribosomal complex. In Chloroherpeton thalassium (strain ATCC 35110 / GB-78), this protein is Translation initiation factor IF-2.